Here is a 377-residue protein sequence, read N- to C-terminus: Succinyl-diaminopimelate desuccinylase (377 aa).

Zn(2+) is bound at residue histidine 66. The active site involves aspartate 68. Aspartate 99 contacts Zn(2+). Glutamate 133 (proton acceptor) is an active-site residue. 3 residues coordinate Zn(2+): glutamate 134, glutamate 163, and histidine 349.

This sequence belongs to the peptidase M20A family. DapE subfamily. In terms of assembly, homodimer. It depends on Zn(2+) as a cofactor. The cofactor is Co(2+).

It carries out the reaction N-succinyl-(2S,6S)-2,6-diaminopimelate + H2O = (2S,6S)-2,6-diaminopimelate + succinate. It participates in amino-acid biosynthesis; L-lysine biosynthesis via DAP pathway; LL-2,6-diaminopimelate from (S)-tetrahydrodipicolinate (succinylase route): step 3/3. Catalyzes the hydrolysis of N-succinyl-L,L-diaminopimelic acid (SDAP), forming succinate and LL-2,6-diaminopimelate (DAP), an intermediate involved in the bacterial biosynthesis of lysine and meso-diaminopimelic acid, an essential component of bacterial cell walls. In Legionella pneumophila (strain Paris), this protein is Succinyl-diaminopimelate desuccinylase.